The sequence spans 122 residues: MICOS complex subunit MIC13 homolog QIL1 (122 aa).

Residues 9-25 (GGLVAATVYYTQKVGIW) form a helical membrane-spanning segment.

This sequence belongs to the MICOS complex subunit Mic13 family. Component of the mitochondrial contact site and cristae organizing system (MICOS) complex.

The protein resides in the mitochondrion inner membrane. Functionally, component of the MICOS complex, a large protein complex of the mitochondrial inner membrane that plays crucial roles in the maintenance of crista junctions, inner membrane architecture, and formation of contact sites to the outer membrane. This Drosophila melanogaster (Fruit fly) protein is MICOS complex subunit MIC13 homolog QIL1.